The primary structure comprises 28 residues: Venom protein (28 aa).

Residues Lys1–Ala28 are disordered. Polar residues predominate over residues Asp19–Ala28.

As to expression, expressed by the venom gland.

It localises to the secreted. Causes symptoms of mild intoxication and transient paralysis in insects (A.domestica). This is Venom protein from Rhopalurus junceus (Caribbean blue scorpion).